A 296-amino-acid chain; its full sequence is dTDP-4-dehydrorhamnose reductase (296 aa).

NADH is bound by residues 10 to 12 (GQI), 35 to 36 (DL), and 59 to 61 (AYT). NADPH-binding positions include 11–12 (QI), 35–36 (DL), and 59–61 (AYT). A dTDP-beta-L-rhamnose-binding site is contributed by 100–101 (TD). The NADH site is built by Tyr-124 and Lys-128. NADPH contacts are provided by Tyr-124 and Lys-128. The Proton donor/acceptor role is filled by Tyr-124. DTDP-beta-L-rhamnose is bound at residue Trp-149.

The protein belongs to the dTDP-4-dehydrorhamnose reductase family. In terms of assembly, homodimer. The cofactor is Mg(2+).

It carries out the reaction dTDP-beta-L-rhamnose + NADP(+) = dTDP-4-dehydro-beta-L-rhamnose + NADPH + H(+). It participates in carbohydrate biosynthesis; dTDP-L-rhamnose biosynthesis. Its function is as follows. Involved in the biosynthesis of the dTDP-L-rhamnose which is an important component of lipopolysaccharide (LPS). Catalyzes the reduction of dTDP-6-deoxy-L-lyxo-4-hexulose to yield dTDP-L-rhamnose. RmlD uses NADH and NADPH nearly equally well. This is dTDP-4-dehydrorhamnose reductase from Sinorhizobium fredii (strain NBRC 101917 / NGR234).